A 146-amino-acid chain; its full sequence is 3-dehydroquinate dehydratase (146 aa).

The active-site Proton acceptor is Tyr-24. Residues Asn-73, His-79, and Asp-86 each coordinate substrate. Residue His-99 is the Proton donor of the active site. Substrate-binding positions include 100-101 (LS) and Arg-110.

The protein belongs to the type-II 3-dehydroquinase family. In terms of assembly, homododecamer.

The enzyme catalyses 3-dehydroquinate = 3-dehydroshikimate + H2O. It participates in metabolic intermediate biosynthesis; chorismate biosynthesis; chorismate from D-erythrose 4-phosphate and phosphoenolpyruvate: step 3/7. Functionally, catalyzes a trans-dehydration via an enolate intermediate. This chain is 3-dehydroquinate dehydratase, found in Shewanella baltica (strain OS185).